The primary structure comprises 249 residues: Probable transcriptional regulatory protein OTT_1378 (249 aa).

It belongs to the TACO1 family.

Its subcellular location is the cytoplasm. The protein is Probable transcriptional regulatory protein OTT_1378 of Orientia tsutsugamushi (strain Ikeda) (Rickettsia tsutsugamushi).